Consider the following 76-residue polypeptide: uncharacterized protein (76 aa).

It localises to the host cytoplasm. This is an uncharacterized protein from Escherichia phage Mu (Bacteriophage Mu).